A 243-amino-acid polypeptide reads, in one-letter code: Mitochondrial import inner membrane translocase subunit TIM17-2 (243 aa).

The next 4 membrane-spanning stretches (helical) occupy residues I19–I36, F66–L83, W90–A109, and S115–L137. Tandem repeats lie at residues G149–Q151, G152–P154, G155–Q157, G158–Q160, G161–P163, G164–P166, G167–Q169, G170–P172, G173–Q175, and G176–Q178. The 10 X approximate repeats GMQ/P stretch occupies residues G149–Q178. Low complexity predominate over residues P166–Q183. Residues P166–K243 are disordered. Residues S184–A198 show a composition bias toward polar residues. Residues F211–V228 are compositionally biased toward basic and acidic residues.

This sequence belongs to the Tim17/Tim22/Tim23 family. Component of the TIM17:23 complex at least composed of TIM23, TIM17 and TIM50. The complex interacts with the TIM44 component of the PAM complex. Interacts with TIM23-2. In terms of tissue distribution, expressed in roots, flowers, leaves and young cotyledons.

It is found in the mitochondrion inner membrane. The protein localises to the mitochondrion outer membrane. Functionally, essential component of the TIM17:23 complex, a complex that mediates the translocation of transit peptide-containing proteins across the mitochondrial inner membrane. Links the inner and outer membranes. The chain is Mitochondrial import inner membrane translocase subunit TIM17-2 (TIM17-2) from Arabidopsis thaliana (Mouse-ear cress).